The following is a 347-amino-acid chain: D-fructose 1,6-bisphosphatase class 2/sedoheptulose 1,7-bisphosphatase (347 aa).

4 residues coordinate Mn(2+): aspartate 33, glutamate 57, aspartate 97, and glutamate 100. Residues 100–102 (EGT), tyrosine 131, 176–178 (RDR), and 198–200 (DGD) each bind substrate. Mn(2+) is bound at residue glutamate 225.

Belongs to the FBPase class 2 family. As to quaternary structure, homotetramer. Requires Mn(2+) as cofactor.

It catalyses the reaction beta-D-fructose 1,6-bisphosphate + H2O = beta-D-fructose 6-phosphate + phosphate. It carries out the reaction D-sedoheptulose 1,7-bisphosphate + H2O = D-sedoheptulose 7-phosphate + phosphate. It participates in carbohydrate biosynthesis; Calvin cycle. Its function is as follows. Catalyzes the hydrolysis of fructose 1,6-bisphosphate (Fru 1,6-P2) and sedoheptulose 1,7-bisphosphate (Sed 1,7-P2) to fructose 6-phosphate and sedoheptulose 7-phosphate, respectively. The sequence is that of D-fructose 1,6-bisphosphatase class 2/sedoheptulose 1,7-bisphosphatase from Thermosynechococcus vestitus (strain NIES-2133 / IAM M-273 / BP-1).